The sequence spans 205 residues: Ribosomal RNA small subunit methyltransferase G (205 aa).

S-adenosyl-L-methionine contacts are provided by residues Gly76, Leu81, 127 to 128 (IE), and Arg140.

It belongs to the methyltransferase superfamily. RNA methyltransferase RsmG family.

It localises to the cytoplasm. The enzyme catalyses guanosine(527) in 16S rRNA + S-adenosyl-L-methionine = N(7)-methylguanosine(527) in 16S rRNA + S-adenosyl-L-homocysteine. In terms of biological role, specifically methylates the N7 position of guanine in position 527 of 16S rRNA. The polypeptide is Ribosomal RNA small subunit methyltransferase G (Francisella tularensis subsp. holarctica (strain FTNF002-00 / FTA)).